The sequence spans 314 residues: Ferrochelatase (314 aa).

The Fe cation site is built by His184 and Glu259.

It belongs to the ferrochelatase family.

The protein localises to the cytoplasm. It carries out the reaction heme b + 2 H(+) = protoporphyrin IX + Fe(2+). Its pathway is porphyrin-containing compound metabolism; protoheme biosynthesis; protoheme from protoporphyrin-IX: step 1/1. Catalyzes the ferrous insertion into protoporphyrin IX. This is Ferrochelatase from Chlamydia trachomatis serovar D (strain ATCC VR-885 / DSM 19411 / UW-3/Cx).